We begin with the raw amino-acid sequence, 167 residues long: Ribonuclease H (167 aa).

The RNase H type-1 domain maps to 1-143 (MYKQIEIFTD…CDQLARKAAK (143 aa)). Residues Asp10, Glu48, Asp70, and Asp135 each coordinate Mg(2+).

The protein belongs to the RNase H family. Monomer. The cofactor is Mg(2+).

Its subcellular location is the cytoplasm. The catalysed reaction is Endonucleolytic cleavage to 5'-phosphomonoester.. Endonuclease that specifically degrades the RNA of RNA-DNA hybrids. This Blochmanniella floridana protein is Ribonuclease H.